A 524-amino-acid polypeptide reads, in one-letter code: Excitatory amino acid transporter 3 (524 aa).

Residues 1–18 (MGKPARKGCDSKRFLKNN) are Cytoplasmic-facing. The helical transmembrane segment at 19-38 (WLLLSTVVAVVLGIVIGVLV) threads the bilayer. At 39-61 (REYSNLSTLDKFYFAFPGEILMR) the chain is on the extracellular side. The N-linked (GlcNAc...) asparagine glycan is linked to Asn43. The chain crosses the membrane as a helical span at residues 62–82 (MLKLVILPLIVSSMITGVAAL). Over 83-93 (DSNVSGKIGLR) the chain is Cytoplasmic. The helical transmembrane segment at 94 to 114 (AVLYYFCTTIIAVILGIVLVV) threads the bilayer. Residues Tyr98, Thr101, and Thr102 each coordinate Na(+). Topologically, residues 115–205 (SIKPGVTQKV…RTKEYRVVGL (91 aa)) are extracellular. 2 N-linked (GlcNAc...) asparagine glycosylation sites follow: Asn178 and Asn195. Residues 206 to 229 (YSDGINVLGLIVFCLVFGLVIGKM) traverse the membrane as a helical segment. At 230 to 238 (GEKGQILVD) the chain is on the cytoplasmic side. Residues 239-266 (FFNALSDATMKIVQIIMCYMPLGILFLI) form a helical membrane-spanning segment. Over 267 to 286 (AGKIIEVEDWEIFRKLGLYM) the chain is Extracellular. Residues 287-308 (VTVLSGLAIHSIVILPLIYFIV) traverse the membrane as a helical segment. At 309-313 (VRKNP) the chain is on the cytoplasmic side. The discontinuously helical intramembrane region spans 314–344 (FRFAMGMTQALLTALMISSSSATLPVTFRCA). Residues Ser331 and Ser333 each coordinate L-aspartate. The Cytoplasmic portion of the chain corresponds to 345 to 353 (EEKNRVDKR). Residues 354–380 (ITRFVLPVGATINMDGTALYEAVAAVF) traverse the membrane as a helical segment. Positions 362, 364, 366, and 368 each coordinate Na(+). Thr370 is a binding site for L-aspartate. The Extracellular segment spans residues 381–393 (IAQLNDMDLSIGQ). The discontinuously helical intramembrane region spans 394–427 (IITISVTATAASIGAAGVPQAGLVTMVIVLSAVG). Residues Ser405, Ile406, and Ala408 each coordinate Na(+). Val411 contacts L-aspartate. Topologically, residues 428–440 (LPAEDVTLIIAVD) are extracellular. The helical transmembrane segment at 441–462 (WLLDRFRTVVNVLGDAFGTGIV) threads the bilayer. Positions 447, 448, and 451 each coordinate L-aspartate. Residues Asn451 and Asp455 each contribute to the Na(+) site. Residues 463–524 (EKLSKKELEQ…TISFTQTSQF (62 aa)) lie on the Cytoplasmic side of the membrane. Residues Ser517 and Ser522 each carry the phosphoserine modification.

This sequence belongs to the dicarboxylate/amino acid:cation symporter (DAACS) (TC 2.A.23) family. SLC1A1 subfamily. In terms of assembly, homotrimer. Interacts with ARL6IP5. Interacts with RTN2 (via N-terminus); the interaction promotes cell surface expression of SLC1A1. Interacts with SORCS2; this interaction is important for normal expression at the cell membrane. Brain, but also small intestine, kidney, liver and heart.

It localises to the cell membrane. Its subcellular location is the apical cell membrane. It is found in the synapse. The protein resides in the synaptosome. The protein localises to the early endosome membrane. It localises to the late endosome membrane. Its subcellular location is the recycling endosome membrane. The enzyme catalyses K(+)(in) + L-glutamate(out) + 3 Na(+)(out) + H(+)(out) = K(+)(out) + L-glutamate(in) + 3 Na(+)(in) + H(+)(in). It carries out the reaction K(+)(in) + L-aspartate(out) + 3 Na(+)(out) + H(+)(out) = K(+)(out) + L-aspartate(in) + 3 Na(+)(in) + H(+)(in). It catalyses the reaction D-aspartate(out) + K(+)(in) + 3 Na(+)(out) + H(+)(out) = D-aspartate(in) + K(+)(out) + 3 Na(+)(in) + H(+)(in). The catalysed reaction is K(+)(in) + L-cysteine(out) + 3 Na(+)(out) + H(+)(out) = K(+)(out) + L-cysteine(in) + 3 Na(+)(in) + H(+)(in). Functionally, sodium-dependent, high-affinity amino acid transporter that mediates the uptake of L-glutamate and also L-aspartate and D-aspartate. Can also transport L-cysteine. Functions as a symporter that transports one amino acid molecule together with two or three Na(+) ions and one proton, in parallel with the counter-transport of one K(+) ion. Mediates Cl(-) flux that is not coupled to amino acid transport; this avoids the accumulation of negative charges due to aspartate and Na(+) symport. Plays an important role in L-glutamate and L-aspartate reabsorption in renal tubuli. Plays a redundant role in the rapid removal of released glutamate from the synaptic cleft, which is essential for terminating the postsynaptic action of glutamate. Contributes to glutathione biosynthesis and protection against oxidative stress via its role in L-glutamate and L-cysteine transport. Negatively regulated by ARL6IP5. The polypeptide is Excitatory amino acid transporter 3 (SLC1A1) (Oryctolagus cuniculus (Rabbit)).